The sequence spans 317 residues: Olfactory receptor 2T27 (317 aa).

The Extracellular portion of the chain corresponds to 1–22 (MEQSNYSVYADFILLGLFSNAR). Asn-5 is a glycosylation site (N-linked (GlcNAc...) asparagine). Residues 23 to 43 (FPWLLFALILLVFLTSIASNV) traverse the membrane as a helical segment. The Cytoplasmic portion of the chain corresponds to 44–60 (VKIILIHIDSRLHTPMY). The helical transmembrane segment at 61-83 (FLLSQLSLRDILYISTIVPKMLV) threads the bilayer. The Extracellular segment spans residues 84–97 (DQVMSQRAISFAGC). Cys-97 and Cys-189 are oxidised to a cystine. A helical transmembrane segment spans residues 98-118 (TAQHFLYLTLAGAEFFLLGLM). Topologically, residues 119-139 (SYDRYVAICNPLHYPVLMSRK) are cytoplasmic. The chain crosses the membrane as a helical span at residues 140 to 160 (ICWLIVAAAWLGGSIDGFLLT). The Extracellular segment spans residues 161–197 (PVTMQFPFCASREINHFFCEVPALLKLSCTDTSAYET). The chain crosses the membrane as a helical span at residues 198–218 (AMYVCCIMMLLIPFSVISGSY). Residues 219 to 244 (TRILITVYRMSEAEGRGKAVATCSSH) lie on the Cytoplasmic side of the membrane. Residues 245–265 (MVVVSLFYGAAMYTYVLPHSY) form a helical membrane-spanning segment. At 266-271 (HTPEQD) the chain is on the extracellular side. Residues 272–292 (KAVSAFYTILTPMLNPLIYSL) traverse the membrane as a helical segment. At 293 to 317 (RNKDVTGALQKVVGRCVSSGKVTTF) the chain is on the cytoplasmic side.

Belongs to the G-protein coupled receptor 1 family.

The protein localises to the cell membrane. Functionally, odorant receptor. The sequence is that of Olfactory receptor 2T27 (OR2T27) from Homo sapiens (Human).